The chain runs to 633 residues: DNA mismatch repair protein MutL (633 aa).

This sequence belongs to the DNA mismatch repair MutL/HexB family.

Its function is as follows. This protein is involved in the repair of mismatches in DNA. It is required for dam-dependent methyl-directed DNA mismatch repair. May act as a 'molecular matchmaker', a protein that promotes the formation of a stable complex between two or more DNA-binding proteins in an ATP-dependent manner without itself being part of a final effector complex. This chain is DNA mismatch repair protein MutL, found in Pseudomonas fluorescens (strain SBW25).